The sequence spans 219 residues: Thiopurine S-methyltransferase (219 aa).

Positions 10, 45, 66, and 123 each coordinate S-adenosyl-L-methionine.

Belongs to the class I-like SAM-binding methyltransferase superfamily. TPMT family.

It is found in the cytoplasm. The enzyme catalyses S-adenosyl-L-methionine + a thiopurine = S-adenosyl-L-homocysteine + a thiopurine S-methylether.. In Shewanella frigidimarina (strain NCIMB 400), this protein is Thiopurine S-methyltransferase.